A 585-amino-acid polypeptide reads, in one-letter code: DNA mismatch repair protein MutL (585 aa).

This sequence belongs to the DNA mismatch repair MutL/HexB family.

Its function is as follows. This protein is involved in the repair of mismatches in DNA. It is required for dam-dependent methyl-directed DNA mismatch repair. May act as a 'molecular matchmaker', a protein that promotes the formation of a stable complex between two or more DNA-binding proteins in an ATP-dependent manner without itself being part of a final effector complex. The polypeptide is DNA mismatch repair protein MutL (Methanoculleus marisnigri (strain ATCC 35101 / DSM 1498 / JR1)).